Consider the following 378-residue polypeptide: MAEFVRAEVLGTKFEYTTRYVNPQPIGMGSFGLVCSAFDQITQQPVALKKIMKPFDSSSLAKRTYREIRLLKYLRHENLICMRDIFISPLEDIYIATELLGTDLGRLLSIKPLDSKFSQYFIYQILRGLKYIHSANVIHRDLKPTNILINENCDLKICDFGLARLQEPQMTGYVATRYYRAPEIMLTWQRYGVQVDVWSAGCILAEMLRGKPLFPGKDHVHQFHLITNILGNPPDAVIEKITSKNTVNFVKSLPSREPRDLSTVVPKDTDFDAIDLLKKMLVIDPDTRISAQDALRHPYLAPYHDPTDEPVASGPFDWSFDSADFPKETSKIMIYSEVLDYLNVDNPADPAPFDPSTPFDPSALEREFSEFLSDSGQT.

One can recognise a Protein kinase domain in the interval 20–300 (YVNPQPIGMG…AQDALRHPYL (281 aa)). ATP contacts are provided by residues 26–34 (IGMGSFGLV) and Lys49. Residue Asp141 is the Proton acceptor of the active site.

The protein belongs to the protein kinase superfamily. Ser/Thr protein kinase family. MAP kinase subfamily. Requires Mg(2+) as cofactor.

It localises to the nucleus. It catalyses the reaction L-seryl-[protein] + ATP = O-phospho-L-seryl-[protein] + ADP + H(+). It carries out the reaction L-threonyl-[protein] + ATP = O-phospho-L-threonyl-[protein] + ADP + H(+). With respect to regulation, activated by threonine and tyrosine phosphorylation. Functionally, mitogen-activated protein kinase (MAPK), part of the high-osmolarity glycerol (HOG) pathway. With sakA, plays a role in the osmotic and oxidative stress responses. Involved in paradoxical growth, the cell wall integrity (CWI) pathway and biofilm formation. SakA and mpkC collaborate during virulence and mpkC could act by modulating sakA activity upon exposure to several types of stresses and during cell wall biosynthesis. This Aspergillus fumigatus (strain CBS 144.89 / FGSC A1163 / CEA10) (Neosartorya fumigata) protein is Mitogen-activated protein kinase mpkC.